The chain runs to 502 residues: MKGTLIFVVFYSSYGFAHCNTILRSSSLSRNFEDSLRRIPRSTDKDETGFEDSNVQEVIFILLYCLFVALAILICGLIIFYNSRKRELRANRSRGDEYLLEPTSADHKRRNSSNIVPPEPTPYPITSGESDLRQTPSRLSNVECPPELELAPINEKIMYLHYYAEVEINEEDLDISKGRPLGSGEFGIIRKGFLRSKNSKNEEKESRLEVAVKLPLNEYNQIQQELIYDELKVMCAVGKHPNILALVGGITFGERKMIVSEFVENGDLLSFLRDNRIYFTNDQWTLETEQDSLSLVDLLSFAFQIAKGMEYLIHVPCVHRDLALRNVLIKKNRIIRIADFGLARRHKNKDYYKTQSVDTPLPIHWMAPESIDKLLFTQKSDVWSYGVCLYELFSLGKSPYENVIKYDQRDFYWKYVLSYLNEGKRLAQPAHADAEIYNVMKLCWDLDMNSRTTFLDCIEFFEKELKTTSNEYFLDLTRKLRSETNNQLRLSNWLSDEKHCDS.

Positions 1-19 (MKGTLIFVVFYSSYGFAHC) are cleaved as a signal peptide. Topologically, residues 20–58 (NTILRSSSLSRNFEDSLRRIPRSTDKDETGFEDSNVQEV) are extracellular. A helical transmembrane segment spans residues 59-79 (IFILLYCLFVALAILICGLII). Residues 80-502 (FYNSRKRELR…WLSDEKHCDS (423 aa)) are Cytoplasmic-facing. The tract at residues 99–140 (LLEPTSADHKRRNSSNIVPPEPTPYPITSGESDLRQTPSRLS) is disordered. Polar residues predominate over residues 127-140 (SGESDLRQTPSRLS). The Protein kinase domain maps to 175–473 (ISKGRPLGSG…ELKTTSNEYF (299 aa)). Residues 181–189 (LGSGEFGII) and K213 each bind ATP. The Proton acceptor role is filled by D321.

The protein belongs to the protein kinase superfamily. Tyr protein kinase family.

It localises to the cell membrane. It catalyses the reaction L-tyrosyl-[protein] + ATP = O-phospho-L-tyrosyl-[protein] + ADP + H(+). In terms of biological role, receptor tyrosine kinase which plays a role in promoting longevity and resistance to stresses including UV irradiation and high temperatures, probably downstream of daf-16. The chain is Tyrosine-protein kinase receptor old-1 from Caenorhabditis elegans.